The chain runs to 215 residues: Kunitz trypsin inhibitor 2 (215 aa).

The signal sequence occupies residues 1–23 (MKNPSVISFLIILLFAATICTHG). C67 and C114 form a disulfide bridge. N145 carries an N-linked (GlcNAc...) asparagine glycan.

It belongs to the protease inhibitor I3 (leguminous Kunitz-type inhibitor) family. Interacts with RD21A. Interacts with RD21B and RD21C. As to expression, expressed in vascular bundles of the carpels, the transmitting tract of the style and septum epidermis. Expressed in etiolated seedlings.

The protein resides in the secreted. Its subcellular location is the cell wall. It is found in the extracellular space. The protein localises to the apoplast. It localises to the endoplasmic reticulum. Its function is as follows. Water-soluble and chlorophyll-binding protein that probably does not function as a chloroplast chlorophyll carrier and is not involved in photosynthesis. Involved in the control of cell death in the transmitting tract and septum epidermis during flower development. Binds and inhibits the activity of the cysteine protease RD21A as a pro-death protein. May play a role in herbivore resistance activation during seedling greening. This chain is Kunitz trypsin inhibitor 2, found in Arabidopsis thaliana (Mouse-ear cress).